A 503-amino-acid chain; its full sequence is AMP phosphorylase (503 aa).

Residues glycine 168, 194–199, and threonine 203 each bind AMP; that span reads SRAITS. The active-site Proton donor is aspartate 256. 2 residues coordinate AMP: serine 264 and lysine 288.

It belongs to the thymidine/pyrimidine-nucleoside phosphorylase family. Type 2 subfamily.

The catalysed reaction is AMP + phosphate = alpha-D-ribose 1,5-bisphosphate + adenine. It carries out the reaction CMP + phosphate = cytosine + alpha-D-ribose 1,5-bisphosphate. It catalyses the reaction UMP + phosphate = alpha-D-ribose 1,5-bisphosphate + uracil. Catalyzes the conversion of AMP and phosphate to adenine and ribose 1,5-bisphosphate (R15P). Exhibits phosphorylase activity toward CMP and UMP in addition to AMP. Functions in an archaeal AMP degradation pathway, together with R15P isomerase and RubisCO. In Thermococcus sibiricus (strain DSM 12597 / MM 739), this protein is AMP phosphorylase.